Here is a 391-residue protein sequence, read N- to C-terminus: S-adenosylmethionine synthase (391 aa).

H14 is an ATP binding site. D16 serves as a coordination point for Mg(2+). E42 contributes to the K(+) binding site. The L-methionine site is built by E55 and Q98. Positions 98–108 (QSVDIAMGVDE) are flexible loop. ATP-binding positions include 172–174 (DGK), 238–239 (RF), D247, 253–254 (RK), A270, and K274. D247 is a binding site for L-methionine. K278 is a binding site for L-methionine.

Belongs to the AdoMet synthase family. In terms of assembly, homotetramer; dimer of dimers. Mg(2+) is required as a cofactor. Requires K(+) as cofactor.

The protein resides in the cytoplasm. The enzyme catalyses L-methionine + ATP + H2O = S-adenosyl-L-methionine + phosphate + diphosphate. Its pathway is amino-acid biosynthesis; S-adenosyl-L-methionine biosynthesis; S-adenosyl-L-methionine from L-methionine: step 1/1. Catalyzes the formation of S-adenosylmethionine (AdoMet) from methionine and ATP. The overall synthetic reaction is composed of two sequential steps, AdoMet formation and the subsequent tripolyphosphate hydrolysis which occurs prior to release of AdoMet from the enzyme. The sequence is that of S-adenosylmethionine synthase from Clostridium botulinum (strain Hall / ATCC 3502 / NCTC 13319 / Type A).